A 525-amino-acid chain; its full sequence is GMP synthase [glutamine-hydrolyzing] (525 aa).

The Glutamine amidotransferase type-1 domain occupies 9–207; it reads RILILDFGSQ…VRDICQCEAL (199 aa). The Nucleophile role is filled by Cys86. Active-site residues include His181 and Glu183. Positions 208–400 constitute a GMPS ATP-PPase domain; sequence WTPAKIIDDA…LGLPYDMLYR (193 aa). An ATP-binding site is contributed by 235 to 241; sequence SGGVDSS.

Homodimer.

It catalyses the reaction XMP + L-glutamine + ATP + H2O = GMP + L-glutamate + AMP + diphosphate + 2 H(+). It participates in purine metabolism; GMP biosynthesis; GMP from XMP (L-Gln route): step 1/1. In terms of biological role, catalyzes the synthesis of GMP from XMP. This chain is GMP synthase [glutamine-hydrolyzing], found in Enterobacter sp. (strain 638).